Reading from the N-terminus, the 140-residue chain is ATP synthase epsilon chain (140 aa).

The protein belongs to the ATPase epsilon chain family. F-type ATPases have 2 components, CF(1) - the catalytic core - and CF(0) - the membrane proton channel. CF(1) has five subunits: alpha(3), beta(3), gamma(1), delta(1), epsilon(1). CF(0) has three main subunits: a, b and c.

The protein resides in the cell inner membrane. In terms of biological role, produces ATP from ADP in the presence of a proton gradient across the membrane. This Sodalis glossinidius (strain morsitans) protein is ATP synthase epsilon chain.